The sequence spans 641 residues: Bifunctional protein glk (641 aa).

Residues 1-340 (MSTGAQTKAA…QLSNRTGGAS (340 aa)) form a glucokinase region. 23–28 (ADVGGT) provides a ligand contact to ATP. In terms of domain architecture, HTH rpiR-type spans 341 to 417 (SAVFERIRQM…LKLATGLTGT (77 aa)). Residues 341–641 (SAVFERIRQM…SHGAAPAAKD (301 aa)) form a putative HTH-type transcriptional regulator region. The segment at residues 377 to 396 (IVNIARKADVSQPTVIRFCR) is a DNA-binding region (H-T-H motif). One can recognise an SIS domain in the interval 461–600 (AIDILNNARR…AVGVAIRRAA (140 aa)). The helical transmembrane segment at 576 to 596 (SMISRILHLVMIDILAVGVAI) threads the bilayer.

In the N-terminal section; belongs to the bacterial glucokinase family.

Its subcellular location is the membrane. It catalyses the reaction D-glucose + ATP = D-glucose 6-phosphate + ADP + H(+). The polypeptide is Bifunctional protein glk (glk) (Burkholderia mallei (strain ATCC 23344)).